The sequence spans 232 residues: Flavin-dependent thymidylate synthase (232 aa).

The ThyX domain maps to 1-204 (MKIALLQHTP…PTIFRDAGPG (204 aa)). Residues S55, 79-81 (RHR), and Q87 contribute to the FAD site. DUMP-binding positions include 76 to 79 (QLVR), 87 to 91 (QQSQR), and R143. Residues 79–89 (RHRIASYSQQS) carry the ThyX motif motif. Residues 159–161 (NAR) and H165 contribute to the FAD site. R170 lines the dUMP pocket. The active-site Involved in ionization of N3 of dUMP, leading to its activation is R170.

The protein belongs to the thymidylate synthase ThyX family. In terms of assembly, homotetramer. FAD serves as cofactor.

It carries out the reaction dUMP + (6R)-5,10-methylene-5,6,7,8-tetrahydrofolate + NADPH + H(+) = dTMP + (6S)-5,6,7,8-tetrahydrofolate + NADP(+). It functions in the pathway pyrimidine metabolism; dTTP biosynthesis. Catalyzes the reductive methylation of 2'-deoxyuridine-5'-monophosphate (dUMP) to 2'-deoxythymidine-5'-monophosphate (dTMP) while utilizing 5,10-methylenetetrahydrofolate (mTHF) as the methyl donor, and NADPH and FADH(2) as the reductant. The polypeptide is Flavin-dependent thymidylate synthase (Geobacter sulfurreducens (strain ATCC 51573 / DSM 12127 / PCA)).